A 483-amino-acid polypeptide reads, in one-letter code: Glutamyl-tRNA(Gln) amidotransferase subunit A (483 aa).

Residues Lys76 and Ser151 each act as charge relay system in the active site. Ser175 functions as the Acyl-ester intermediate in the catalytic mechanism.

Belongs to the amidase family. GatA subfamily. In terms of assembly, heterotrimer of A, B and C subunits.

It catalyses the reaction L-glutamyl-tRNA(Gln) + L-glutamine + ATP + H2O = L-glutaminyl-tRNA(Gln) + L-glutamate + ADP + phosphate + H(+). Functionally, allows the formation of correctly charged Gln-tRNA(Gln) through the transamidation of misacylated Glu-tRNA(Gln) in organisms which lack glutaminyl-tRNA synthetase. The reaction takes place in the presence of glutamine and ATP through an activated gamma-phospho-Glu-tRNA(Gln). This Pseudomonas fluorescens (strain ATCC BAA-477 / NRRL B-23932 / Pf-5) protein is Glutamyl-tRNA(Gln) amidotransferase subunit A.